Here is a 354-residue protein sequence, read N- to C-terminus: NADH-quinone oxidoreductase subunit H (354 aa).

8 helical membrane passes run 25–45 (LVRILVVAVVILLCVAYLILW), 91–111 (WIYLIAPIMVVVPAFAVWAVI), 126–146 (LLYAMAISSIGVYGVILAGWA), 170–190 (MGFALVVVLMTAGTLNLSGIV), 205–225 (FLSWNWLPLLPMFVVYFISGI), 267–287 (IVISALAATLFLGGWSAPFGF), 290–310 (FVPGIVWLVAKVFLLLSVFIW), and 330–350 (IFIPVCVVWLVVVGFWIMSPL).

This sequence belongs to the complex I subunit 1 family. NDH-1 is composed of 14 different subunits. Subunits NuoA, H, J, K, L, M, N constitute the membrane sector of the complex.

The protein localises to the cell inner membrane. The enzyme catalyses a quinone + NADH + 5 H(+)(in) = a quinol + NAD(+) + 4 H(+)(out). In terms of biological role, NDH-1 shuttles electrons from NADH, via FMN and iron-sulfur (Fe-S) centers, to quinones in the respiratory chain. The immediate electron acceptor for the enzyme in this species is believed to be ubiquinone. Couples the redox reaction to proton translocation (for every two electrons transferred, four hydrogen ions are translocated across the cytoplasmic membrane), and thus conserves the redox energy in a proton gradient. This subunit may bind ubiquinone. The sequence is that of NADH-quinone oxidoreductase subunit H from Paraburkholderia phytofirmans (strain DSM 17436 / LMG 22146 / PsJN) (Burkholderia phytofirmans).